Consider the following 710-residue polypeptide: DNA polymerase epsilon subunit B (710 aa).

Positions 116 to 167 (FLKRPNSPTDTEITTLSQGSATSVVNPDSHSPMMLEEGSPINSDSEPISEHE) are disordered. Positions 121-144 (NSPTDTEITTLSQGSATSVVNPDS) are enriched in polar residues.

The protein belongs to the DNA polymerase epsilon subunit B family. In terms of assembly, heterotetramer. Consists of four subunits: POL2, DPB2, DPB3 and DPB4.

Its subcellular location is the nucleus. In terms of biological role, as accessory component of the DNA polymerase epsilon (DNA polymerase II) participates in chromosomal DNA replication. This is DNA polymerase epsilon subunit B (DPB2) from Kluyveromyces lactis (strain ATCC 8585 / CBS 2359 / DSM 70799 / NBRC 1267 / NRRL Y-1140 / WM37) (Yeast).